Reading from the N-terminus, the 88-residue chain is Apolipoprotein C-I (88 aa).

The N-terminal stretch at 1-26 (MRLILSLPVLAVVLAMVLEGPAPAQA) is a signal peptide.

The protein belongs to the apolipoprotein C1 family.

It is found in the secreted. Functionally, inhibitor of lipoprotein binding to the low density lipoprotein (LDL) receptor, LDL receptor-related protein, and very low density lipoprotein (VLDL) receptor. Associates with high density lipoproteins (HDL) and the triacylglycerol-rich lipoproteins in the plasma and makes up about 10% of the protein of the VLDL and 2% of that of HDL. Appears to interfere directly with fatty acid uptake and is also the major plasma inhibitor of cholesteryl ester transfer protein (CETP). Binds free fatty acids and reduces their intracellular esterification. Modulates the interaction of APOE with beta-migrating VLDL and inhibits binding of beta-VLDL to the LDL receptor-related protein. The chain is Apolipoprotein C-I (APOC1) from Cynopterus brachyotis (Lesser short-nosed fruit bat).